The primary structure comprises 213 residues: Pyridoxine/pyridoxamine 5'-phosphate oxidase (213 aa).

FMN is bound by residues 60 to 65 (RMVLMK), 75 to 76 (YS), K82, and Q104. Residue K65 coordinates substrate. 2 residues coordinate substrate: Y122 and R126. FMN-binding positions include 139 to 140 (QS) and W184. 190–192 (RLH) contributes to the substrate binding site. R194 is an FMN binding site.

This sequence belongs to the pyridoxamine 5'-phosphate oxidase family. Homodimer. The cofactor is FMN.

The enzyme catalyses pyridoxamine 5'-phosphate + O2 + H2O = pyridoxal 5'-phosphate + H2O2 + NH4(+). The catalysed reaction is pyridoxine 5'-phosphate + O2 = pyridoxal 5'-phosphate + H2O2. It participates in cofactor metabolism; pyridoxal 5'-phosphate salvage; pyridoxal 5'-phosphate from pyridoxamine 5'-phosphate: step 1/1. The protein operates within cofactor metabolism; pyridoxal 5'-phosphate salvage; pyridoxal 5'-phosphate from pyridoxine 5'-phosphate: step 1/1. Its function is as follows. Catalyzes the oxidation of either pyridoxine 5'-phosphate (PNP) or pyridoxamine 5'-phosphate (PMP) into pyridoxal 5'-phosphate (PLP). The chain is Pyridoxine/pyridoxamine 5'-phosphate oxidase from Rhodopseudomonas palustris (strain BisA53).